A 195-amino-acid polypeptide reads, in one-letter code: MSGASRGLFWAATCLAALCLSAAQSNSSASPNVTDPPTTTSKVVPTTLTTTKPPETCESFNSCVSCVNATLTNNITCVWLDCHEANKTYCSSELVSNCTQKTSTDSCSVIPTTPVPTNSTAKPTTRPSSPTPTPSVVTSAGATNTTVTPTSQPERKSTFDAASFIGGIVLVLGVQAVIFFLYKFCKSKERNYHTL.

The signal sequence occupies residues 1–23 (MSGASRGLFWAATCLAALCLSAA). Residues 24–160 (QSNSSASPNV…SQPERKSTFD (137 aa)) lie on the Extracellular side of the membrane. Asparagine 26, asparagine 32, asparagine 68, asparagine 74, asparagine 86, asparagine 97, and asparagine 118 each carry an N-linked (GlcNAc...) asparagine glycan. The interval 27–47 (SSASPNVTDPPTTTSKVVPTT) is disordered. The tract at residues 114–154 (PVPTNSTAKPTTRPSSPTPTPSVVTSAGATNTTVTPTSQPE) is disordered. Low complexity predominate over residues 119-140 (STAKPTTRPSSPTPTPSVVTSA). Positions 141–152 (GATNTTVTPTSQ) are enriched in polar residues. Residue asparagine 144 is glycosylated (N-linked (GlcNAc...) asparagine). The chain crosses the membrane as a helical span at residues 161 to 181 (AASFIGGIVLVLGVQAVIFFL). Residues 182–195 (YKFCKSKERNYHTL) are Cytoplasmic-facing. The segment at 189–195 (ERNYHTL) is required for endosomal and lysosomal localization.

It belongs to the CD164 family. As to quaternary structure, interacts with CXCR4. In terms of processing, highly N- and O-glycosylated; contains sialic acid. Ubiquitous. Expressed at highest levels in the liver, kidney, lung and intestine.

The protein resides in the cell membrane. It is found in the lysosome membrane. The protein localises to the endosome membrane. Sialomucin that may play a key role in hematopoiesis. May be involved in cell adhesion. Promotes myogenesis by enhancing CXCR4-dependent cell motility. Positively regulates myoblast migration and promotes myoblast fusion into myotubes. The protein is Sialomucin core protein 24 (Cd164) of Rattus norvegicus (Rat).